Reading from the N-terminus, the 323-residue chain is tRNA N6-adenosine threonylcarbamoyltransferase (323 aa).

Positions 110 and 114 each coordinate Fe cation. Substrate contacts are provided by residues 131 to 135 (VASGG), D164, G177, and N264. D288 is a Fe cation binding site.

It belongs to the KAE1 / TsaD family. Fe(2+) is required as a cofactor.

Its subcellular location is the cytoplasm. It carries out the reaction L-threonylcarbamoyladenylate + adenosine(37) in tRNA = N(6)-L-threonylcarbamoyladenosine(37) in tRNA + AMP + H(+). Functionally, required for the formation of a threonylcarbamoyl group on adenosine at position 37 (t(6)A37) in tRNAs that read codons beginning with adenine. Is involved in the transfer of the threonylcarbamoyl moiety of threonylcarbamoyl-AMP (TC-AMP) to the N6 group of A37, together with TsaE and TsaB. TsaD likely plays a direct catalytic role in this reaction. This is tRNA N6-adenosine threonylcarbamoyltransferase from Thermus thermophilus (strain ATCC BAA-163 / DSM 7039 / HB27).